Reading from the N-terminus, the 365-residue chain is Chorismate synthase (365 aa).

Arg-47 is a binding site for NADP(+). Residues 124 to 126 (RAS), Gly-287, 302 to 306 (KPTAT), and Arg-328 contribute to the FMN site.

The protein belongs to the chorismate synthase family. As to quaternary structure, homotetramer. It depends on FMNH2 as a cofactor.

It carries out the reaction 5-O-(1-carboxyvinyl)-3-phosphoshikimate = chorismate + phosphate. Its pathway is metabolic intermediate biosynthesis; chorismate biosynthesis; chorismate from D-erythrose 4-phosphate and phosphoenolpyruvate: step 7/7. Catalyzes the anti-1,4-elimination of the C-3 phosphate and the C-6 proR hydrogen from 5-enolpyruvylshikimate-3-phosphate (EPSP) to yield chorismate, which is the branch point compound that serves as the starting substrate for the three terminal pathways of aromatic amino acid biosynthesis. This reaction introduces a second double bond into the aromatic ring system. The chain is Chorismate synthase from Prochlorococcus marinus (strain MIT 9215).